Here is a 199-residue protein sequence, read N- to C-terminus: Transgelin-2 (199 aa).

Ala2 is modified (N-acetylalanine). A Phosphoserine modification is found at Ser11. N6-acetyllysine occurs at positions 17 and 20. Residues 24-136 form the Calponin-homology (CH) domain; sequence PDLEQILIQW…RTLMNLGGLA (113 aa). Ser163 is subject to Phosphoserine. Lys171 participates in a covalent cross-link: Glycyl lysine isopeptide (Lys-Gly) (interchain with G-Cter in SUMO2). The stretch at 174–199 is one Calponin-like repeat; it reads IGLQMGTNRGASQAGMTGYGMPRQIL. Residue Thr180 is modified to Phosphothreonine. Arg182 and Arg196 each carry omega-N-methylarginine.

This sequence belongs to the calponin family.

The sequence is that of Transgelin-2 (Tagln2) from Rattus norvegicus (Rat).